The following is a 457-amino-acid chain: Argininosuccinate lyase (457 aa).

It belongs to the lyase 1 family. Argininosuccinate lyase subfamily.

The protein resides in the cytoplasm. The catalysed reaction is 2-(N(omega)-L-arginino)succinate = fumarate + L-arginine. Its pathway is amino-acid biosynthesis; L-arginine biosynthesis; L-arginine from L-ornithine and carbamoyl phosphate: step 3/3. The protein is Argininosuccinate lyase of Pectobacterium atrosepticum (strain SCRI 1043 / ATCC BAA-672) (Erwinia carotovora subsp. atroseptica).